A 279-amino-acid chain; its full sequence is Release factor glutamine methyltransferase (279 aa).

S-adenosyl-L-methionine is bound by residues E141 and N187. Position 187-190 (187-190) interacts with substrate; the sequence is NPPY.

This sequence belongs to the protein N5-glutamine methyltransferase family. PrmC subfamily.

The enzyme catalyses L-glutaminyl-[peptide chain release factor] + S-adenosyl-L-methionine = N(5)-methyl-L-glutaminyl-[peptide chain release factor] + S-adenosyl-L-homocysteine + H(+). Methylates the class 1 translation termination release factors RF1/PrfA and RF2/PrfB on the glutamine residue of the universally conserved GGQ motif. The sequence is that of Release factor glutamine methyltransferase from Corynebacterium glutamicum (strain ATCC 13032 / DSM 20300 / JCM 1318 / BCRC 11384 / CCUG 27702 / LMG 3730 / NBRC 12168 / NCIMB 10025 / NRRL B-2784 / 534).